The following is a 172-amino-acid chain: Peptidyl-prolyl cis-trans isomerase (172 aa).

A PPIase cyclophilin-type domain is found at F7–Q170.

It belongs to the cyclophilin-type PPIase family.

It is found in the cytoplasm. It carries out the reaction [protein]-peptidylproline (omega=180) = [protein]-peptidylproline (omega=0). Binds cyclosporin A (CsA). CsA mediates some of its effects via an inhibitory action on PPIase. PPIases accelerate the folding of proteins. It catalyzes the cis-trans isomerization of proline imidic peptide bonds in oligopeptides. The chain is Peptidyl-prolyl cis-trans isomerase (CYP) from Zea mays (Maize).